A 98-amino-acid chain; its full sequence is NADH-ubiquinone oxidoreductase chain 4L (98 aa).

Helical transmembrane passes span 1 to 21 (MPPI…GLLM), 29 to 49 (SLLC…ILSL), and 61 to 81 (IILL…LVMI).

This sequence belongs to the complex I subunit 4L family. Core subunit of respiratory chain NADH dehydrogenase (Complex I) which is composed of 45 different subunits.

The protein localises to the mitochondrion inner membrane. The catalysed reaction is a ubiquinone + NADH + 5 H(+)(in) = a ubiquinol + NAD(+) + 4 H(+)(out). Functionally, core subunit of the mitochondrial membrane respiratory chain NADH dehydrogenase (Complex I) which catalyzes electron transfer from NADH through the respiratory chain, using ubiquinone as an electron acceptor. Part of the enzyme membrane arm which is embedded in the lipid bilayer and involved in proton translocation. This is NADH-ubiquinone oxidoreductase chain 4L (MT-ND4L) from Galeopterus variegatus (Malayan flying lemur).